A 161-amino-acid chain; its full sequence is Phosphopantetheine adenylyltransferase (161 aa).

S11 provides a ligand contact to substrate. ATP is bound by residues 11–12 (SF) and H19. 3 residues coordinate substrate: K43, L75, and R89. ATP contacts are provided by residues 90-92 (GLR), E100, and 125-131 (YSFISSS).

It belongs to the bacterial CoaD family. Homohexamer. Mg(2+) is required as a cofactor.

Its subcellular location is the cytoplasm. It catalyses the reaction (R)-4'-phosphopantetheine + ATP + H(+) = 3'-dephospho-CoA + diphosphate. It participates in cofactor biosynthesis; coenzyme A biosynthesis; CoA from (R)-pantothenate: step 4/5. Functionally, reversibly transfers an adenylyl group from ATP to 4'-phosphopantetheine, yielding dephospho-CoA (dPCoA) and pyrophosphate. The sequence is that of Phosphopantetheine adenylyltransferase from Staphylococcus carnosus (strain TM300).